The chain runs to 299 residues: Porphobilinogen deaminase (299 aa).

Cysteine 242 is subject to S-(dipyrrolylmethanemethyl)cysteine.

Belongs to the HMBS family. As to quaternary structure, monomer. The cofactor is dipyrromethane.

The enzyme catalyses 4 porphobilinogen + H2O = hydroxymethylbilane + 4 NH4(+). The protein operates within porphyrin-containing compound metabolism; protoporphyrin-IX biosynthesis; coproporphyrinogen-III from 5-aminolevulinate: step 2/4. Tetrapolymerization of the monopyrrole PBG into the hydroxymethylbilane pre-uroporphyrinogen in several discrete steps. The protein is Porphobilinogen deaminase of Rickettsia typhi (strain ATCC VR-144 / Wilmington).